We begin with the raw amino-acid sequence, 194 residues long: RNA pyrophosphohydrolase (194 aa).

Residues Gly6–Gln149 form the Nudix hydrolase domain. The short motif at Gly38–Gly59 is the Nudix box element. The tract at residues Pro158–Glu194 is disordered. A compositionally biased stretch (basic and acidic residues) spans Arg179 to Glu194.

The protein belongs to the Nudix hydrolase family. RppH subfamily. The cofactor is a divalent metal cation.

Accelerates the degradation of transcripts by removing pyrophosphate from the 5'-end of triphosphorylated RNA, leading to a more labile monophosphorylated state that can stimulate subsequent ribonuclease cleavage. This chain is RNA pyrophosphohydrolase, found in Janthinobacterium sp. (strain Marseille) (Minibacterium massiliensis).